We begin with the raw amino-acid sequence, 458 residues long: A-type ATP synthase subunit B (458 aa).

It belongs to the ATPase alpha/beta chains family. As to quaternary structure, has multiple subunits with at least A(3), B(3), C, D, E, F, H, I and proteolipid K(x).

The protein resides in the cell membrane. In terms of biological role, component of the A-type ATP synthase that produces ATP from ADP in the presence of a proton gradient across the membrane. The B chain is a regulatory subunit. This Methanocella arvoryzae (strain DSM 22066 / NBRC 105507 / MRE50) protein is A-type ATP synthase subunit B.